A 357-amino-acid chain; its full sequence is Embryonic growth/differentiation factor 1 (357 aa).

Positions 1-23 are cleaved as a signal peptide; the sequence is MLPVCHRFCDHLLLLLLLPSTTL. A propeptide spanning residues 24-237 is cleaved from the precursor; the sequence is APAPASMGPA…RLCPLPRLRR (214 aa). An N-linked (GlcNAc...) asparagine glycan is attached at Asn191. 3 disulfides stabilise this stretch: Cys251-Cys322, Cys280-Cys354, and Cys284-Cys356.

The protein belongs to the TGF-beta family. As to quaternary structure, homodimer; disulfide-linked. Expressed almost exclusively in the nervous system.

It localises to the secreted. May mediate cell differentiation events during embryonic development. This Mus musculus (Mouse) protein is Embryonic growth/differentiation factor 1 (Gdf1).